Reading from the N-terminus, the 175-residue chain is LIPDDPDVAAEKARFFRTFKIIEGASKPRGGGIAVRPALPPGADVYTMPRPQPKWMGPLASKVPASLPGSTAFVSETSDVQNARSHFFNTYNAQVAATMPSPDSPTYYYSPSAPAYVPDAPQEKWTGPLASAVPAGLPGSSPVVFDTPEVYNAKAAFFNTYKNQVKAIIPRPSYF.

In terms of tissue distribution, calcified shell.

This Cancer pagurus (Rock crab) protein is Cuticle protein CP1876.